We begin with the raw amino-acid sequence, 200 residues long: MTTELRRKLVIVGDGACGKTCLLIVFSKGTFPEVYVPTVFENYVADVEVDGRHIELALWDTAGQEDYDRLRPLSYPDSHVVLICFSVDAPESLDNVQEKWISEVLHFCSNLPILLVGCKVDLRNDPKTIEELSKTSQKPITFEEGQVVAQKIGAYKYLECSAKLNEGVNEVFETAARASMLKFKPASVPKTKKKKHCILL.

Gly-13–Thr-20 is a binding site for GTP. The Effector region signature appears at Tyr-35 to Tyr-43. GTP is bound by residues Asp-60–Gln-64 and Cys-118–Asp-121. Cys-197 is subject to Cysteine methyl ester. Cys-197 carries the S-geranylgeranyl cysteine lipid modification. A propeptide spans Ile-198–Leu-200 (removed in mature form).

This sequence belongs to the small GTPase superfamily. Rho family.

The protein localises to the cell membrane. The polypeptide is GTP-binding protein rho5 (rho5) (Schizosaccharomyces pombe (strain 972 / ATCC 24843) (Fission yeast)).